The sequence spans 199 residues: Probable nicotinate-nucleotide adenylyltransferase (199 aa).

The protein belongs to the NadD family.

It carries out the reaction nicotinate beta-D-ribonucleotide + ATP + H(+) = deamido-NAD(+) + diphosphate. It functions in the pathway cofactor biosynthesis; NAD(+) biosynthesis; deamido-NAD(+) from nicotinate D-ribonucleotide: step 1/1. Catalyzes the reversible adenylation of nicotinate mononucleotide (NaMN) to nicotinic acid adenine dinucleotide (NaAD). In Chloroherpeton thalassium (strain ATCC 35110 / GB-78), this protein is Probable nicotinate-nucleotide adenylyltransferase.